A 225-amino-acid chain; its full sequence is Uracil-DNA glycosylase (225 aa).

The active-site Proton acceptor is Asp-65.

The protein belongs to the uracil-DNA glycosylase (UDG) superfamily. UNG family.

The protein resides in the cytoplasm. The catalysed reaction is Hydrolyzes single-stranded DNA or mismatched double-stranded DNA and polynucleotides, releasing free uracil.. Its function is as follows. Excises uracil residues from the DNA which can arise as a result of misincorporation of dUMP residues by DNA polymerase or due to deamination of cytosine. This chain is Uracil-DNA glycosylase, found in Bacillus licheniformis (strain ATCC 14580 / DSM 13 / JCM 2505 / CCUG 7422 / NBRC 12200 / NCIMB 9375 / NCTC 10341 / NRRL NRS-1264 / Gibson 46).